A 277-amino-acid polypeptide reads, in one-letter code: Shikimate dehydrogenase (NADP(+)) (277 aa).

Shikimate is bound by residues 18-20 (SKS) and Thr65. Lys69 acts as the Proton acceptor in catalysis. An NADP(+)-binding site is contributed by Glu81. The shikimate site is built by Asn90 and Asp106. Residues 130-134 (GAGGA), 154-159 (NRTFSK), and Met217 each bind NADP(+). Position 219 (Tyr219) interacts with shikimate. Gly241 is a binding site for NADP(+).

Belongs to the shikimate dehydrogenase family. Homodimer.

It carries out the reaction shikimate + NADP(+) = 3-dehydroshikimate + NADPH + H(+). It participates in metabolic intermediate biosynthesis; chorismate biosynthesis; chorismate from D-erythrose 4-phosphate and phosphoenolpyruvate: step 4/7. Involved in the biosynthesis of the chorismate, which leads to the biosynthesis of aromatic amino acids. Catalyzes the reversible NADPH linked reduction of 3-dehydroshikimate (DHSA) to yield shikimate (SA). The protein is Shikimate dehydrogenase (NADP(+)) of Vibrio parahaemolyticus serotype O3:K6 (strain RIMD 2210633).